A 132-amino-acid chain; its full sequence is Large-conductance mechanosensitive channel (132 aa).

2 helical membrane passes run 14–34 and 67–87; these read VIDL…VSSL and GNFI…FMFV.

This sequence belongs to the MscL family. In terms of assembly, homopentamer.

The protein localises to the cell membrane. Its function is as follows. Channel that opens in response to stretch forces in the membrane lipid bilayer. May participate in the regulation of osmotic pressure changes within the cell. The chain is Large-conductance mechanosensitive channel from Bacillus cereus (strain AH820).